The following is a 209-amino-acid chain: Claudin-4 (209 aa).

The Cytoplasmic segment spans residues 1–7 (MASMGLQ). Residues 1–103 (MASMGLQVMG…GVLLSVVGGK (103 aa)) are interaction with EPHA2. A helical membrane pass occupies residues 8–28 (VMGIALAVLGWLAVMLCCALP). Topologically, residues 29 to 81 (MWRVTAFIGSNIVTSQTIWEGLWMNCVVQSTGQMQCKVYDSLLALPQDLQAAR) are extracellular. A disulfide bond links cysteine 54 and cysteine 64. A helical membrane pass occupies residues 82–102 (ALVIISIIVAALGVLLSVVGG). Topologically, residues 103 to 117 (KCTNCLEDESAKAKT) are cytoplasmic. Residues 118 to 138 (MIVAGVVFLLAGLMVIVPVSW) form a helical membrane-spanning segment. Residues 139-160 (TAHNIIQDFYNPLVASGQKREM) are Extracellular-facing. Residues 161–181 (GASLYVGWAASGLLLLGGGLL) traverse the membrane as a helical segment. Residues 182–209 (CCNCPPRTDKPYSAKYSAARSAAASNYV) lie on the Cytoplasmic side of the membrane. Tyrosine 208 carries the phosphotyrosine; by EPHA2 modification. Residues 208-209 (YV) are interactions with TJP1, TJP2 and TJP3.

Belongs to the claudin family. As to quaternary structure, can form heteropolymeric strands with other claudins. Interacts with CLDN8. Interacts with CLDN1. Directly interacts with TJP1/ZO-1. Interacts with TJP2/ZO-2 and TJP3/ZO-3. Interacts with EPHA2; phosphorylates CLDN4 and may regulate tight junctions. In terms of assembly, (Microbial infection) Interacts (via both extracellular domains) with Clostridium perfringens enterotoxin CPE; the interaction may disrupt claudin assembly in tight junctions. Post-translationally, phosphorylated. Phosphorylation by EPHA2 is stimulated by EFNA1 and alters interaction with TJP1.

It is found in the cell junction. It localises to the tight junction. The protein resides in the cell membrane. The catalysed reaction is chloride(in) = chloride(out). The enzyme catalyses bromide(in) = bromide(out). It carries out the reaction iodide(out) = iodide(in). It catalyses the reaction fluoride(in) = fluoride(out). Functionally, can associate with other claudins to regulate tight junction structural and functional strand dynamics. May coassemble with CLDN8 into tight junction strands containing anion-selective channels that convey paracellular chloride permeability in renal collecting ducts. May integrate into CLDN3 strands to modulate localized tight junction barrier properties. May disrupt strand assembly of channel-forming CLDN2 and CLDN15 and inhibit cation conductance. Cannot form tight junction strands on its own. In Homo sapiens (Human), this protein is Claudin-4.